The sequence spans 910 residues: DNA mismatch repair protein MutS (910 aa).

Polar residues predominate over residues 1–15 (MPRSAAQSEEQTLQG). The tract at residues 1–94 (MPRSAAQSEE…EPAWAHHSQV (94 aa)) is disordered. Residues 44 to 54 (DASLSADAAAR) are compositionally biased toward low complexity. 726–733 (GPNASGKS) contacts ATP.

The protein belongs to the DNA mismatch repair MutS family.

Functionally, this protein is involved in the repair of mismatches in DNA. It is possible that it carries out the mismatch recognition step. This protein has a weak ATPase activity. The sequence is that of DNA mismatch repair protein MutS from Synechococcus sp. (strain WH7803).